The primary structure comprises 180 residues: Large ribosomal subunit protein uL6 (180 aa).

This sequence belongs to the universal ribosomal protein uL6 family. As to quaternary structure, part of the 50S ribosomal subunit.

Its function is as follows. This protein binds to the 23S rRNA, and is important in its secondary structure. It is located near the subunit interface in the base of the L7/L12 stalk, and near the tRNA binding site of the peptidyltransferase center. In Salinispora tropica (strain ATCC BAA-916 / DSM 44818 / JCM 13857 / NBRC 105044 / CNB-440), this protein is Large ribosomal subunit protein uL6.